Consider the following 219-residue polypeptide: Abasic site processing protein YobE (219 aa).

Cys-2 functions as the Nucleophile in the catalytic mechanism. Cys-2 carries the post-translational modification Thiazolidine linkage to a ring-opened DNA abasic site. Glu-106 is an active-site residue.

Belongs to the SOS response-associated peptidase family.

Its activity is regulated as follows. Formation and reversal of DNA-protein cross-link depends on DNA context. Catalyzes formation of the thiazolidine linkage in presence of abasic sites in single-stranded DNA. Mediates the reversal of the thiazolidine cross-link in presence of double stranded DNA. Sensor of abasic sites in single-stranded DNA (ssDNA) required to preserve genome integrity by promoting error-free repair of abasic sites. Recognizes and binds abasic sites in ssDNA at replication forks and chemically modifies the lesion by forming a covalent cross-link with DNA: forms a stable thiazolidine linkage between a ring-opened abasic site and the alpha-amino and sulfhydryl substituents of its N-terminal catalytic cysteine residue. The DNA-protein cross-link is then reversed: able to catalyze the reversal of the thiazolidine cross-link and cycle between a cross-link and a non-cross-linked state depending on DNA context: mediates self-reversal of the thiazolidine cross-link in double stranded DNA. May act as a protease: mediates autocatalytic processing of its N-terminal methionine in order to expose the catalytic cysteine. In Bacillus subtilis (strain 168), this protein is Abasic site processing protein YobE (yobE).